A 104-amino-acid polypeptide reads, in one-letter code: Large ribosomal subunit protein uL24 (104 aa).

It belongs to the universal ribosomal protein uL24 family. As to quaternary structure, part of the 50S ribosomal subunit.

One of two assembly initiator proteins, it binds directly to the 5'-end of the 23S rRNA, where it nucleates assembly of the 50S subunit. In terms of biological role, one of the proteins that surrounds the polypeptide exit tunnel on the outside of the subunit. In Chromobacterium violaceum (strain ATCC 12472 / DSM 30191 / JCM 1249 / CCUG 213 / NBRC 12614 / NCIMB 9131 / NCTC 9757 / MK), this protein is Large ribosomal subunit protein uL24.